A 131-amino-acid chain; its full sequence is Aspartate 1-decarboxylase (131 aa).

Serine 25 serves as the catalytic Schiff-base intermediate with substrate; via pyruvic acid. The residue at position 25 (serine 25) is a Pyruvic acid (Ser). Threonine 57 contributes to the substrate binding site. Tyrosine 58 (proton donor) is an active-site residue. 73-75 contacts substrate; that stretch reads GAA. Residues 112–131 form a disordered region; that stretch reads NVPTTQKSENPGQGSLRNAI. Residues 113–131 are compositionally biased toward polar residues; that stretch reads VPTTQKSENPGQGSLRNAI.

Belongs to the PanD family. In terms of assembly, heterooctamer of four alpha and four beta subunits. The cofactor is pyruvate. In terms of processing, is synthesized initially as an inactive proenzyme, which is activated by self-cleavage at a specific serine bond to produce a beta-subunit with a hydroxyl group at its C-terminus and an alpha-subunit with a pyruvoyl group at its N-terminus.

The protein localises to the cytoplasm. It catalyses the reaction L-aspartate + H(+) = beta-alanine + CO2. It participates in cofactor biosynthesis; (R)-pantothenate biosynthesis; beta-alanine from L-aspartate: step 1/1. Its function is as follows. Catalyzes the pyruvoyl-dependent decarboxylation of aspartate to produce beta-alanine. This is Aspartate 1-decarboxylase from Syntrophotalea carbinolica (strain DSM 2380 / NBRC 103641 / GraBd1) (Pelobacter carbinolicus).